We begin with the raw amino-acid sequence, 436 residues long: MQVQLETLGNLERRLDIALPLTDIDAEVQKRLARVARTAKIAGFRPGKAPLKMVERNYGASVREDVLGEQVQLGFSKAVAEQKLRVAGYPRFEPAADNDPAAGEFKFSATFEVYPELTLGSLDGKEVEKAVCEVTDAEIDKTIDVLRKQRTRFNRVERAAADTDRVIIDFAGKIDGEAFAGGSSENFPFVLGQGQMLPEFEAGVIGMKEGESKDVEVSFPADYHGKDVAGKTAVFTITVKNVAEAILPEIDADFAKALGITDGDVSKLRAEIEKNVKREIARRLAARNKEAVMQVLIDANPLELPQSLVMMEISRLMHQAKQDLAQRGMDVKSLPDLPADLFRDQAARRVALGLILAELVKANELKASPEQIKARVEEWADSYEHPEEVIKWYYESPERLEGPENLVLEDNVVEFVLSQAKVNEKAVSFDELMGNA.

In terms of domain architecture, PPIase FKBP-type spans 163-248 (TDRVIIDFAG…VKNVAEAILP (86 aa)).

Belongs to the FKBP-type PPIase family. Tig subfamily.

Its subcellular location is the cytoplasm. It catalyses the reaction [protein]-peptidylproline (omega=180) = [protein]-peptidylproline (omega=0). In terms of biological role, involved in protein export. Acts as a chaperone by maintaining the newly synthesized protein in an open conformation. Functions as a peptidyl-prolyl cis-trans isomerase. In Laribacter hongkongensis (strain HLHK9), this protein is Trigger factor.